The primary structure comprises 126 residues: Small ribosomal subunit protein bS6 (126 aa).

Residues 103-126 (LKAKDERKAPEALVEEVEAEDADE) are disordered. The span at 115 to 126 (LVEEVEAEDADE) shows a compositional bias: acidic residues.

It belongs to the bacterial ribosomal protein bS6 family.

Functionally, binds together with bS18 to 16S ribosomal RNA. This is Small ribosomal subunit protein bS6 from Glaesserella parasuis serovar 5 (strain SH0165) (Haemophilus parasuis).